The sequence spans 1779 residues: 5-methyl-1-naphthoate synthase (1779 aa).

In terms of domain architecture, Ketosynthase family 3 (KS3) spans 10 to 433 (VEPLAVIGMS…GSIAHAVLQQ (424 aa)). Catalysis depends on for beta-ketoacyl synthase activity residues Cys181, His316, and His356. The interval 902–1027 (HTLIGARTTV…ATVVHEPEVG (126 aa)) is N-terminal hotdog fold. The PKS/mFAS DH domain occupies 902-1180 (HTLIGARTTV…YVKVQDIGSG (279 aa)). The interval 1042-1180 (PVSWTWAKVD…YVKVQDIGSG (139 aa)) is C-terminal hotdog fold. Residues 1664–1742 (GELPELVLKV…ALAEFLAAEV (79 aa)) enclose the Carrier domain. An O-(pantetheine 4'-phosphoryl)serine modification is found at Ser1702. Residues 1746 to 1771 (TADAEETDPVAGLPAPQQGSGTAEQL) are disordered.

It carries out the reaction 5 malonyl-CoA + acetyl-CoA + 3 NADPH + 7 H(+) = 5-methyl-1-naphthoate + 5 CO2 + 3 NADP(+) + 6 CoA + 4 H2O. It participates in antibiotic biosynthesis. Its function is as follows. Polyketide synthase that catalyzes the biosynthesis of the bicyclic aromatic compound 5-methyl-1-naphthoate in the biosynthesis of the antitumor antibiotic azinomycin B. This chain is 5-methyl-1-naphthoate synthase, found in Streptomyces sahachiroi.